Here is a 58-residue protein sequence, read N- to C-terminus: uncharacterized protein (58 aa).

This is an uncharacterized protein from Dictyostelium discoideum (Social amoeba).